The following is a 192-amino-acid chain: uncharacterized protein (192 aa).

Residues 29–160 enclose the Nudix hydrolase domain; the sequence is QRQAAVLVPI…PLDIHRRGND (132 aa). Residues 67–89 carry the Nudix box motif; that stretch reads GAVDNTDATLIAAALREAQEEVA. Mg(2+) is bound by residues glutamate 83 and glutamate 87.

It belongs to the Nudix hydrolase family. PCD1 subfamily. Mn(2+) is required as a cofactor. Requires Mg(2+) as cofactor.

Functionally, probably mediates the hydrolysis of some nucleoside diphosphate derivatives. This is an uncharacterized protein from Klebsiella pneumoniae (strain 342).